Here is a 194-residue protein sequence, read N- to C-terminus: Large ribosomal subunit protein eL15 (194 aa).

The tract at residues 158–194 (ANRGLTSAGKKGRGLMYKGKGAEKARPGVRANGKKTK) is disordered.

It belongs to the eukaryotic ribosomal protein eL15 family.

This is Large ribosomal subunit protein eL15 from Methanococcus maripaludis (strain DSM 14266 / JCM 13030 / NBRC 101832 / S2 / LL).